The following is a 2393-amino-acid chain: Leucine-rich repeat serine/threonine-protein kinase 1 (2393 aa).

10 ANK repeats span residues 56–86, 90–120, 123–152, 197–226, 230–259, 264–293, 317–347, 361–390, 407–437, and 439–464; these read HGRT…SLNL, RGKT…PMKS, EGHC…KESE, EDET…HLLQ, SKDT…QLVK, EGST…PSEF, ECRT…SIDG, RGRT…DVNL, IGSG…DTDN, and ALRL…FADP. LRR repeat units follow at residues 532-553, 555-576, 580-600, 604-625, and 627-648; these read AITR…LFQM, SLRS…TYYI, SLEI…QFLS, QLQQ…IWLC, and ALKE…ARAS. Positions 649–675 are disordered; it reads RGERPRLNNSNNNFNTQSPTQESNPIV. 3 LRR repeats span residues 718-739, 742-763, and 765-787; these read TLTT…LACT, RLLI…ACVP, and HLRT…SPLH. Residues 797–844 are disordered; that stretch reads TSNGSMLPKRRNSPARQHRSRSKSAVRSQRSLSVSRHHALIDPQKEEE. A compositionally biased stretch (basic residues) spans 804-820; sequence PKRRNSPARQHRSRSKS. Residues 821–830 show a composition bias toward polar residues; it reads AVRSQRSLSV. Over residues 835 to 844 the composition is skewed to basic and acidic residues; sequence ALIDPQKEEE. LRR repeat units lie at residues 856 to 877, 883 to 905, 906 to 928, and 930 to 952; these read WLKT…NAAS, ALNV…ARLT, LLSM…YGML, and RLWS…VNVE. The Roc domain occupies 969 to 1167; that stretch reads ESKTYHHLRL…NTIYRTAWEV (199 aa). GTP-binding positions include 982-989, 1040-1044, and 1098-1101; these read GSDGVGKS, DFGGQ, and TNLD. One can recognise a COR domain in the interval 1233–1422; it reads FYAACTFLHD…GFWSRLVTRI (190 aa). 2 disordered regions span residues 1361 to 1382 and 1596 to 1633; these read CPSP…TDQN and RNGS…RTTG. Polar residues-rich tracts occupy residues 1366–1382 and 1620–1633; these read GSPT…TDQN and ITSS…RTTG. The Protein kinase domain occupies 1694–1992; it reads LKRSRMLGRG…LVGFCAAPEF (299 aa). ATP-binding positions include 1700 to 1708 and lysine 1726; that span reads LGRGAFGFV. Aspartate 1847 (proton acceptor) is an active-site residue.

The protein belongs to the protein kinase superfamily. TKL Ser/Thr protein kinase family. ROCO subfamily. Requires Mg(2+) as cofactor. Mn(2+) is required as a cofactor. In terms of tissue distribution, expressed in cell bodies, but not in dendritic or axonal processes, of adult head neurons. Also present in non-neuronal tissues, such as the body wall musculature and the epithelial cells of the nematode vulva.

It localises to the golgi apparatus. It carries out the reaction L-seryl-[protein] + ATP = O-phospho-L-seryl-[protein] + ADP + H(+). The enzyme catalyses L-threonyl-[protein] + ATP = O-phospho-L-threonyl-[protein] + ADP + H(+). Its function is as follows. Determines polarized sorting of synaptic vesicle (SV) proteins to the axons by excluding SV proteins from the dendrite-specific transport machinery in the Golgi. Role in stress response. Appears to antagonize the effects of pink-1 both in the regulation of axon guidance and stress response. This chain is Leucine-rich repeat serine/threonine-protein kinase 1 (lrk-1), found in Caenorhabditis elegans.